The chain runs to 541 residues: Developmental and secondary metabolism regulator VEL1 (541 aa).

Residues 26-220 form the Velvet domain; it reads NRHLWYQLTV…ADQGCRVRIR (195 aa). A Nuclear localization signal motif is present at residues 40 to 45; the sequence is ERARAC. Disordered stretches follow at residues 222-447 and 464-483; these read DVRM…MPTQ and PIEA…TGGK. The segment covering 230–244 has biased composition (basic and acidic residues); sequence GKGSGYDRREEEYAR. Low complexity predominate over residues 289–298; it reads APSLPHAPSL. Pro residues-rich tracts occupy residues 299 to 314, 345 to 355, and 425 to 439; these read PHAP…PPAA, APIPPVTPTGP, and SPAP…PAPS. The segment at 444-472 is PEST; sequence MPTQSSLAPLKIASLVSPLPPIEAQTEPL.

It belongs to the velvet family. VeA subfamily. As to quaternary structure, component of the heterotrimeric velvet complex composed of LAE1, VEL1 and VEL2; VEL1 acting as a bridging protein between LAE1 and VEL2.

Its subcellular location is the nucleus. It localises to the cytoplasm. Its function is as follows. Component of the velvet transcription factor complex that controls sexual/asexual developmental ratio in response to light, promoting sexual development in the darkness while stimulating asexual sporulation under illumination. The velvet complex acts as a global regulator for secondary metabolite gene expression. Controls the expression of the gliotoxin gene cluster. Plays a key role in mycoparasitism. This Hypocrea virens (strain Gv29-8 / FGSC 10586) (Gliocladium virens) protein is Developmental and secondary metabolism regulator VEL1.